Here is a 95-residue protein sequence, read N- to C-terminus: Large ribosomal subunit protein uL23 (95 aa).

The protein belongs to the universal ribosomal protein uL23 family. Part of the 50S ribosomal subunit. Contacts protein L29, and trigger factor when it is bound to the ribosome.

Its function is as follows. One of the early assembly proteins it binds 23S rRNA. One of the proteins that surrounds the polypeptide exit tunnel on the outside of the ribosome. Forms the main docking site for trigger factor binding to the ribosome. The chain is Large ribosomal subunit protein uL23 from Heliobacterium modesticaldum (strain ATCC 51547 / Ice1).